The chain runs to 432 residues: Phytase AppA (432 aa).

The first 22 residues, 1–22 (MKAILIPFLSLLIPLTPQSAFA), serve as a signal peptide directing secretion. R38 serves as a coordination point for 1D-myo-inositol hexakisphosphate. Catalysis depends on H39, which acts as the Nucleophile. Residues 42 to 46 (RAPTK) and R114 contribute to the 1D-myo-inositol hexakisphosphate site. Disulfide bonds link C99-C130, C155-C430, C200-C210, and C404-C413. Residues R289 and 325 to 327 (HDT) contribute to the 1D-myo-inositol hexakisphosphate site. D326 acts as the Proton donor in catalysis.

The protein belongs to the histidine acid phosphatase family. Monomer.

It localises to the periplasm. It carries out the reaction 1D-myo-inositol hexakisphosphate + H2O = 1D-myo-inositol 1,2,3,4,5-pentakisphosphate + phosphate. The enzyme catalyses 1D-myo-inositol 1,2,3,4,5-pentakisphosphate + H2O = 1D-myo-inositol 2,3,4,5-tetrakisphosphate + phosphate. It catalyses the reaction 1D-myo-inositol 2,3,4,5-tetrakisphosphate + H2O = 1D-myo-inositol 2,4,5-triphosphate + phosphate. The catalysed reaction is 1D-myo-inositol 2,4,5-triphosphate + H2O = 1D-myo-inositol 2,5-bisphosphate + phosphate. It carries out the reaction 1D-myo-inositol 2,5-bisphosphate + H2O = 1D-myo-inositol 2-phosphate + phosphate. The enzyme catalyses GTP + H2O = GDP + phosphate + H(+). With respect to regulation, contains three consecutive and one non-consecutive disulfide bonds and shows a strong dependence on DsbC for its full activity. Competitively inhibited by tartaric acid and by sodium fluorid. Catalyzes the hydrolysis of phytate (or myo-inositol hexakisphosphate, an indigestible organic form of phosphorus that is found in many plant tissues) to myo-inositol and inorganic phosphate. Dephosphorylates phytate in a stereospecific way by sequential removal of phosphate groups to produce myo-inositol 2-monophosphate. Also shows phosphoanhydride phosphatase activity and hydrolyzes the distal phosphoryl residues of GTP, the 5'-beta-phosphoryl residue of the regulatory nucleotide ppGpp and tripolyphosphates. Does not split most phosphomonoesters with the exception of the synthetic substrate p-nitrophenyl phosphate (pNPP), 2,3-bisphosphoglycerate and fructose 1,6-bisphosphate. This Escherichia coli (strain K12) protein is Phytase AppA.